The chain runs to 509 residues: Kynureninase 1 (509 aa).

Pyridoxal 5'-phosphate contacts are provided by residues leucine 154, threonine 155, 183–186 (FPSD), aspartate 270, histidine 273, and tyrosine 295. Lysine 296 carries the N6-(pyridoxal phosphate)lysine modification. Residues tryptophan 345 and asparagine 373 each contribute to the pyridoxal 5'-phosphate site.

It belongs to the kynureninase family. In terms of assembly, homodimer. The cofactor is pyridoxal 5'-phosphate.

The protein localises to the cytoplasm. It catalyses the reaction L-kynurenine + H2O = anthranilate + L-alanine + H(+). It carries out the reaction 3-hydroxy-L-kynurenine + H2O = 3-hydroxyanthranilate + L-alanine + H(+). It participates in amino-acid degradation; L-kynurenine degradation; L-alanine and anthranilate from L-kynurenine: step 1/1. It functions in the pathway cofactor biosynthesis; NAD(+) biosynthesis; quinolinate from L-kynurenine: step 2/3. Its function is as follows. Catalyzes the cleavage of L-kynurenine (L-Kyn) and L-3-hydroxykynurenine (L-3OHKyn) into anthranilic acid (AA) and 3-hydroxyanthranilic acid (3-OHAA), respectively. This Chaetomium globosum (strain ATCC 6205 / CBS 148.51 / DSM 1962 / NBRC 6347 / NRRL 1970) (Soil fungus) protein is Kynureninase 1.